Here is a 344-residue protein sequence, read N- to C-terminus: Heat-inducible transcription repressor HrcA (344 aa).

The protein belongs to the HrcA family.

Negative regulator of class I heat shock genes (grpE-dnaK-dnaJ and groELS operons). Prevents heat-shock induction of these operons. The polypeptide is Heat-inducible transcription repressor HrcA (Streptococcus pneumoniae (strain P1031)).